Consider the following 555-residue polypeptide: Glucose-6-phosphate isomerase (555 aa).

The active-site Proton donor is the Glu356. Catalysis depends on residues His387 and Lys515.

The protein belongs to the GPI family.

Its subcellular location is the cytoplasm. The catalysed reaction is alpha-D-glucose 6-phosphate = beta-D-fructose 6-phosphate. The protein operates within carbohydrate biosynthesis; gluconeogenesis. Its pathway is carbohydrate degradation; glycolysis; D-glyceraldehyde 3-phosphate and glycerone phosphate from D-glucose: step 2/4. Functionally, catalyzes the reversible isomerization of glucose-6-phosphate to fructose-6-phosphate. This Desulforapulum autotrophicum (strain ATCC 43914 / DSM 3382 / VKM B-1955 / HRM2) (Desulfobacterium autotrophicum) protein is Glucose-6-phosphate isomerase.